A 527-amino-acid chain; its full sequence is T-complex protein 1 subunit delta (527 aa).

Belongs to the TCP-1 chaperonin family. In terms of assembly, heterooligomeric complex of about 850 to 900 kDa that forms two stacked rings, 12 to 16 nm in diameter.

The protein resides in the cytoplasm. Its function is as follows. Molecular chaperone; assists the folding of proteins upon ATP hydrolysis. Known to play a role, in vitro, in the folding of actin and tubulin. The protein is T-complex protein 1 subunit delta (cct4) of Schizosaccharomyces pombe (strain 972 / ATCC 24843) (Fission yeast).